A 305-amino-acid chain; its full sequence is Undecaprenyl-diphosphatase (305 aa).

Transmembrane regions (helical) follow at residues 18-38 (GVTELFPVSSLGHAVLVPALV), 55-75 (YLAFIVGLHVATAAALLVFFW), 103-123 (WLIVVGTIPVGLAGLALEQLF), 130-150 (PVPAAAFLLLNSVALYAGEVL), 187-207 (GVLIGAAQILALLPGISRSGI), 225-245 (FSFLLATPIILAAGVYKIPEL), 246-266 (FGPLGAGIGGQVLAGSIASFV), and 284-304 (LTPFAIYCAVAGGASLVWLAL).

It belongs to the UppP family.

Its subcellular location is the cell membrane. The enzyme catalyses di-trans,octa-cis-undecaprenyl diphosphate + H2O = di-trans,octa-cis-undecaprenyl phosphate + phosphate + H(+). Functionally, catalyzes the dephosphorylation of undecaprenyl diphosphate (UPP). Confers resistance to bacitracin. This Mycobacterium avium (strain 104) protein is Undecaprenyl-diphosphatase.